Reading from the N-terminus, the 1058-residue chain is Ubiquitin-like modifier-activating enzyme 1 (1058 aa).

The disordered stretch occupies residues 1–46 (MSSSPLSKKRRVSGPDPKPGSNCSSAQSVLSEVSSVPTNGMAKNGS). Ser-2 carries the N-acetylserine modification. Residues Ser-4, Ser-13, Ser-21, Ser-24, and Ser-46 each carry the phosphoserine modification. Residues 24-36 (SSAQSVLSEVSSV) show a composition bias toward low complexity. Tyr-55 is modified (phosphotyrosine). 2 repeat units span residues 63 to 199 (GHEA…GQLF) and 459 to 611 (GSDL…QVVI). The tract at residues 63–611 (GHEAMKMLQT…GTKGNVQVVI (549 aa)) is 2 approximate repeats. ATP is bound by residues Ala-478, Asp-504, Arg-515, Lys-528, and 576–577 (DN). Lys-528 is modified (N6-succinyllysine). Cys-632 acts as the Glycyl thioester intermediate in catalysis. Lys-671 is modified (N6-acetyllysine). Thr-800 carries the post-translational modification Phosphothreonine. Residues Ser-810, Ser-816, Ser-820, and Ser-835 each carry the phosphoserine modification. At Lys-980 the chain carries N6-acetyllysine.

The protein belongs to the ubiquitin-activating E1 family. Monomer. Interacts with GAN (via BTB domain). Post-translationally, ISGylated.

It is found in the cytoplasm. The protein resides in the mitochondrion. Its subcellular location is the nucleus. It catalyses the reaction ATP + ubiquitin + [E1 ubiquitin-activating enzyme]-L-cysteine = AMP + diphosphate + S-ubiquitinyl-[E1 ubiquitin-activating enzyme]-L-cysteine.. The protein operates within protein modification; protein ubiquitination. In terms of biological role, catalyzes the first step in ubiquitin conjugation to mark cellular proteins for degradation through the ubiquitin-proteasome system. Activates ubiquitin by first adenylating its C-terminal glycine residue with ATP, and thereafter linking this residue to the side chain of a cysteine residue in E1, yielding a ubiquitin-E1 thioester and free AMP. Essential for the formation of radiation-induced foci, timely DNA repair and for response to replication stress. Promotes the recruitment of TP53BP1 and BRCA1 at DNA damage sites. The chain is Ubiquitin-like modifier-activating enzyme 1 from Rattus norvegicus (Rat).